The chain runs to 73 residues: Translation initiation factor IF-1 (73 aa).

Residues 1–73 (MDIKEEAIET…TKGRIVYREK (73 aa)) form the S1-like domain.

This sequence belongs to the IF-1 family. As to quaternary structure, component of the 30S ribosomal translation pre-initiation complex which assembles on the 30S ribosome in the order IF-2 and IF-3, IF-1 and N-formylmethionyl-tRNA(fMet); mRNA recruitment can occur at any time during PIC assembly.

The protein resides in the cytoplasm. In terms of biological role, one of the essential components for the initiation of protein synthesis. Stabilizes the binding of IF-2 and IF-3 on the 30S subunit to which N-formylmethionyl-tRNA(fMet) subsequently binds. Helps modulate mRNA selection, yielding the 30S pre-initiation complex (PIC). Upon addition of the 50S ribosomal subunit IF-1, IF-2 and IF-3 are released leaving the mature 70S translation initiation complex. The sequence is that of Translation initiation factor IF-1 from Borreliella afzelii (strain PKo) (Borrelia afzelii).